The following is a 490-amino-acid chain: Probable cytosol aminopeptidase (490 aa).

2 residues coordinate Mn(2+): K257 and D262. K269 is a catalytic residue. Positions 281, 341, and 343 each coordinate Mn(2+). Residue R345 is part of the active site.

This sequence belongs to the peptidase M17 family. It depends on Mn(2+) as a cofactor.

It localises to the cytoplasm. The enzyme catalyses Release of an N-terminal amino acid, Xaa-|-Yaa-, in which Xaa is preferably Leu, but may be other amino acids including Pro although not Arg or Lys, and Yaa may be Pro. Amino acid amides and methyl esters are also readily hydrolyzed, but rates on arylamides are exceedingly low.. The catalysed reaction is Release of an N-terminal amino acid, preferentially leucine, but not glutamic or aspartic acids.. Presumably involved in the processing and regular turnover of intracellular proteins. Catalyzes the removal of unsubstituted N-terminal amino acids from various peptides. In Prochlorococcus marinus (strain AS9601), this protein is Probable cytosol aminopeptidase.